We begin with the raw amino-acid sequence, 292 residues long: Elongation factor Ts (292 aa).

Residues 80-83 form an involved in Mg(2+) ion dislocation from EF-Tu region; it reads TDFV.

Belongs to the EF-Ts family.

It is found in the cytoplasm. Associates with the EF-Tu.GDP complex and induces the exchange of GDP to GTP. It remains bound to the aminoacyl-tRNA.EF-Tu.GTP complex up to the GTP hydrolysis stage on the ribosome. The protein is Elongation factor Ts of Cupriavidus pinatubonensis (strain JMP 134 / LMG 1197) (Cupriavidus necator (strain JMP 134)).